The chain runs to 183 residues: dCTP deaminase, dUMP-forming (183 aa).

Residues 99–104 (KSSIAR), aspartate 117, 125–127 (TLE), glutamine 146, tyrosine 159, lysine 166, and glutamine 170 contribute to the dCTP site. Catalysis depends on glutamate 127, which acts as the Proton donor/acceptor.

The protein belongs to the dCTP deaminase family. Homotrimer.

The catalysed reaction is dCTP + 2 H2O = dUMP + NH4(+) + diphosphate. It functions in the pathway pyrimidine metabolism; dUMP biosynthesis; dUMP from dCTP: step 1/1. Its function is as follows. Bifunctional enzyme that catalyzes both the deamination of dCTP to dUTP and the hydrolysis of dUTP to dUMP without releasing the toxic dUTP intermediate. In Methanoregula boonei (strain DSM 21154 / JCM 14090 / 6A8), this protein is dCTP deaminase, dUMP-forming.